Reading from the N-terminus, the 1835-residue chain is Urea amidolyase (1835 aa).

Residues 122–129 and Lys747 contribute to the ATP site; that span reads GAIIVGKT. The 444-residue stretch at 632–1075 folds into the Biotin carboxylation domain; sequence LFDTVLIANR…STNILNSYQY (444 aa). Residues 751-948 form the ATP-grasp domain; sequence RQIAQKAGVP…LVEWMIRIAA (198 aa). Ser803 bears the Phosphoserine mark. The ATP site is built by Glu830 and Asn865. The 79-residue stretch at 1754–1832 folds into the Biotinyl-binding domain; it reads DEEEDFPEGA…DSGDIVAVIE (79 aa). Lys1798 carries the post-translational modification N6-biotinyllysine.

In terms of assembly, monomer. Biotin serves as cofactor.

The catalysed reaction is urea + hydrogencarbonate + ATP = urea-1-carboxylate + ADP + phosphate + H(+). It catalyses the reaction urea-1-carboxylate + H2O + 3 H(+) = 2 NH4(+) + 2 CO2. It functions in the pathway nitrogen metabolism; urea degradation; CO(2) and NH(3) from urea (allophanate route): step 1/2. The protein operates within nitrogen metabolism; urea degradation; CO(2) and NH(3) from urea (allophanate route): step 2/2. Hydrolysis of urea to ammonia and CO(2). The chain is Urea amidolyase (DUR1,2) from Saccharomyces cerevisiae (strain ATCC 204508 / S288c) (Baker's yeast).